A 336-amino-acid polypeptide reads, in one-letter code: Toluate 1,2-dioxygenase electron transfer component (336 aa).

The region spanning 3–97 is the 2Fe-2S ferredoxin-type domain; it reads HKVATDFEDG…DCVIRVPAAS (95 aa). Residues C40, C45, C48, and C81 each coordinate [2Fe-2S] cluster. Positions 99 to 336 are ferredoxin-reductase; the sequence is VCKTQQAGYQ…FYYEKFAASA (238 aa). In terms of domain architecture, FAD-binding FR-type spans 104–204; sequence QAGYQAAISN…AGPLGAFYLR (101 aa).

This sequence belongs to the bacterial ring-hydroxylating dioxygenase ferredoxin reductase family. This dioxygenase system consists of three proteins: the two subunits of the hydroxylase component (XylX and XylY), and an electron transfer component (XylZ). FAD serves as cofactor. [2Fe-2S] cluster is required as a cofactor.

The enzyme catalyses 2 reduced [2Fe-2S]-[ferredoxin] + NAD(+) + H(+) = 2 oxidized [2Fe-2S]-[ferredoxin] + NADH. Electron transfer component of toluate 1,2-dioxygenase system. This Pseudomonas putida (Arthrobacter siderocapsulatus) protein is Toluate 1,2-dioxygenase electron transfer component (xylZ).